The sequence spans 188 residues: Elongation factor P (188 aa).

The protein belongs to the elongation factor P family.

The protein resides in the cytoplasm. It functions in the pathway protein biosynthesis; polypeptide chain elongation. Involved in peptide bond synthesis. Stimulates efficient translation and peptide-bond synthesis on native or reconstituted 70S ribosomes in vitro. Probably functions indirectly by altering the affinity of the ribosome for aminoacyl-tRNA, thus increasing their reactivity as acceptors for peptidyl transferase. This chain is Elongation factor P, found in Leptospira biflexa serovar Patoc (strain Patoc 1 / Ames).